Here is a 360-residue protein sequence, read N- to C-terminus: MQIIRHSEQTLKTALISKNPVLVSQYEKLDAGEQRLMNEAFQPASDLFGPITLHSPSDWITSHPEAPQDFEQFFSDPYRKTPSPDKRSVYIQAIGSLGNTRIISEEYIKWLTGYCKAYFYGLRVKLLEPVPVSATRCSFRVNENTQNLQIHAGDILKFLKKKKPEDAFCIVGITMIDLYPRDSWNFVFGQASLTDGVGIFSFARYGSDFYSMRYEGKVKKLKKTSSSDYSIFNNYYIPEITSVLLLRSCKTLTHEIGHIFGLRHCQWLACLMQGSNHLEESDRRPLNLCPICLRKLQCAVGFSIVERYKALVRWIDDESSGTPGATPEHSREGNGNLPKPVEAFKEWKEWIIKCLAVLQK.

H254 is a Zn(2+) binding site. E255 acts as the Proton acceptor in catalysis. H258, H264, C265, C270, C289, and C292 together coordinate Zn(2+).

The protein belongs to the peptidase M54 family. Zn(2+) is required as a cofactor.

Its function is as follows. Probable zinc metalloprotease. This is Archaemetzincin-2 (AMZ2) from Macaca fascicularis (Crab-eating macaque).